We begin with the raw amino-acid sequence, 539 residues long: Dopamine receptor 2 (539 aa).

Topologically, residues Met1–Ala113 are extracellular. 4 N-linked (GlcNAc...) asparagine glycosylation sites follow: Asn5, Asn31, Asn47, and Asn68. The helical transmembrane segment at Phe114–Ile134 threads the bilayer. At Arg135 to Tyr145 the chain is on the cytoplasmic side. A helical membrane pass occupies residues Phe146 to Ala166. The Extracellular segment spans residues Leu167–Asp189. Residues Cys182 and Cys261 are joined by a disulfide bond. A helical membrane pass occupies residues Val190–Asp206. Residues Arg207–Ala227 lie on the Cytoplasmic side of the membrane. A helical membrane pass occupies residues Gly228–Trp248. Topologically, residues Arg249–His266 are extracellular. Residues Leu267–Phe287 form a helical membrane-spanning segment. At Thr288 to Thr420 the chain is on the cytoplasmic side. Residues Gly326–Leu387 are disordered. Over residues Ser337–Ser352 the composition is skewed to gly residues. The segment covering Ser356–His367 has biased composition (basic residues). A helical membrane pass occupies residues Leu421–Leu441. The Extracellular portion of the chain corresponds to Ser442–Glu453. The helical transmembrane segment at Ile454 to Tyr474 threads the bilayer. Residues Ala475–Ile539 lie on the Cytoplasmic side of the membrane. 2 S-palmitoyl cysteine lipidation sites follow: Cys492 and Cys493.

Belongs to the G-protein coupled receptor 1 family. Expressed in both central and peripheral nervous systems.

It localises to the cell membrane. In terms of biological role, receptor for dopamine. The activity of this receptor is mediated by G proteins which activate adenylyl cyclase. Also capable of generating a calcium signal. In terms of antagonist responses, would be classed with the D1-like dopamine receptor group. This receptor is an attractive candidate for initiating biochemical cascades underlying olfactory learning. This is Dopamine receptor 2 (Dop1R2) from Drosophila melanogaster (Fruit fly).